The following is a 181-amino-acid chain: Proteinase inhibitor A (181 aa).

Positions Met1–Gly24 are cleaved as a signal peptide. 3 disulfide bridges follow: Cys67-Cys113, Cys134-Cys143, and Cys136-Cys139.

Belongs to the protease inhibitor I3 (leguminous Kunitz-type inhibitor) family.

The protein localises to the secreted. In terms of biological role, possesses two reactive sites. Inhibits an equimolar amount of trypsin and chymotrypsin simultaneously, and inhibits kallikrein weakly. This is Proteinase inhibitor A from Sagittaria sagittifolia (Arrowhead).